Consider the following 494-residue polypeptide: Cysteine--tRNA ligase (494 aa).

Position 29 (cysteine 29) interacts with Zn(2+). The short motif at 31–41 is the 'HIGH' region element; that stretch reads VTVYDHCHIGH. Positions 209, 234, and 238 each coordinate Zn(2+). Residues 266-270 carry the 'KMSKS' region motif; sequence KMSKS. Lysine 269 is an ATP binding site.

This sequence belongs to the class-I aminoacyl-tRNA synthetase family. As to quaternary structure, monomer. Zn(2+) is required as a cofactor.

The protein resides in the cytoplasm. The catalysed reaction is tRNA(Cys) + L-cysteine + ATP = L-cysteinyl-tRNA(Cys) + AMP + diphosphate. In Geotalea uraniireducens (strain Rf4) (Geobacter uraniireducens), this protein is Cysteine--tRNA ligase.